Consider the following 307-residue polypeptide: S-methyl-5'-thioadenosine phosphorylase (307 aa).

Phosphate is bound by residues S16, 59–60, and 92–93; these read RH and SA. M198 contacts substrate. S199 is a phosphate binding site. 222-224 is a binding site for substrate; the sequence is DYD.

Belongs to the PNP/MTAP phosphorylase family. MTAP subfamily. In terms of assembly, homotrimer.

The protein localises to the cytoplasm. It is found in the nucleus. The enzyme catalyses S-methyl-5'-thioadenosine + phosphate = 5-(methylsulfanyl)-alpha-D-ribose 1-phosphate + adenine. Its pathway is amino-acid biosynthesis; L-methionine biosynthesis via salvage pathway; S-methyl-5-thio-alpha-D-ribose 1-phosphate from S-methyl-5'-thioadenosine (phosphorylase route): step 1/1. In terms of biological role, catalyzes the reversible phosphorylation of S-methyl-5'-thioadenosine (MTA) to adenine and 5-methylthioribose-1-phosphate. Involved in the breakdown of MTA, a major by-product of polyamine biosynthesis. Responsible for the first step in the methionine salvage pathway after MTA has been generated from S-adenosylmethionine. Has broad substrate specificity with 6-aminopurine nucleosides as preferred substrates. The polypeptide is S-methyl-5'-thioadenosine phosphorylase (Schizosaccharomyces pombe (strain 972 / ATCC 24843) (Fission yeast)).